A 535-amino-acid polypeptide reads, in one-letter code: Cytochrome P450 71C3 (535 aa).

The chain crosses the membrane as a helical span at residues 23-43 (QTLTLLLIAVPTVLLLLASLA). Cys-475 contacts heme.

This sequence belongs to the cytochrome P450 family. It depends on heme as a cofactor.

Its subcellular location is the membrane. It functions in the pathway secondary metabolite biosynthesis; 2,4-dihydroxy-1,4-benzoxazin-3-one biosynthesis; 2,4-dihydroxy-1,4-benzoxazin-3-one from indoleglycerol phosphate: step 5/5. Catalyzes the conversion of 2-hydroxy-1,4-benzoxazin-3-one (HBOA) to 2,4-dihydroxy-1,4-benzoxazin-3-one (DIBOA). This chain is Cytochrome P450 71C3 (CYP71C3), found in Zea mays (Maize).